Consider the following 666-residue polypeptide: Probable potassium transport system protein Kup (666 aa).

A run of 12 helical transmembrane segments spans residues 16–36 (GFIIALGIVYGDIGTSPLYTM), 58–78 (ISLIIWTLTLITTIKYVLIAL), 100–120 (PWLIVPAMIGGATLLSDGALT), 149–169 (IITTLVILIVLFGIQRFGTGF), 173–193 (IFGPVMFIWFSFLGVSGFFNM), 221–241 (IFILGSIFLATTGAEALYSDL), 253–273 (WPFVKMCIVLSYCGQAAWILA), 294–314 (VYLVSLATLAAIIASQALISG), 343–363 (LYIPVINWILFAVTSCTVLAF), 373–393 (YGLAITITMLMTTILLKYYLI), 399–419 (PILAHLVMAFFALVEFIFFLA), and 424–444 (FMHGGYAVVILALAIVFVMFI).

It belongs to the HAK/KUP transporter (TC 2.A.72) family.

The protein localises to the cell membrane. It carries out the reaction K(+)(in) + H(+)(in) = K(+)(out) + H(+)(out). Its function is as follows. Transport of potassium into the cell. Likely operates as a K(+):H(+) symporter. The chain is Probable potassium transport system protein Kup from Streptococcus pyogenes serotype M3 (strain ATCC BAA-595 / MGAS315).